The sequence spans 523 residues: Cytochrome b5 reductase 4 (523 aa).

Positions 54–130 (LIDVTEEELA…LKECLIGRMA (77 aa)) constitute a Cytochrome b5 heme-binding domain. Residues His-89 and His-112 each coordinate heme. Residues 167-258 (ESHPWYDWFQ…KEPVSWKSLG (92 aa)) enclose the CS domain. The FAD-binding FR-type domain maps to 275-387 (LYYRKCRLAS…SNPQGTFSSF (113 aa)). FAD-binding positions include 367–382 (ENLTVGDYISISNPQG) and 394–426 (DVFLVAAGTGITPMIRLLQHVLTCVSSLRKAKL).

Belongs to the flavoprotein pyridine nucleotide cytochrome reductase family. Requires FAD as cofactor.

It is found in the endoplasmic reticulum. It catalyses the reaction 2 Fe(III)-[cytochrome b5] + NADH = 2 Fe(II)-[cytochrome b5] + NAD(+) + H(+). NADH-cytochrome b5 reductase involved in endoplasmic reticulum stress response pathway. The polypeptide is Cytochrome b5 reductase 4 (cyb5r4) (Xenopus tropicalis (Western clawed frog)).